A 133-amino-acid polypeptide reads, in one-letter code: Ribonuclease VapC29 (133 aa).

Residues 3-122 form the PINc domain; that stretch reads VLLDANVLIA…TLDSGLAHLH (120 aa). Residues Asp6 and Asp97 each coordinate Mg(2+).

Belongs to the PINc/VapC protein family. Requires Mg(2+) as cofactor.

In terms of biological role, toxic component of a type II toxin-antitoxin (TA) system. Its cognate antitoxin is VapB29. Has ribonuclease activity. The protein is Ribonuclease VapC29 of Mycobacterium tuberculosis (strain CDC 1551 / Oshkosh).